We begin with the raw amino-acid sequence, 496 residues long: MGTQKVTPALIFAITVATIGSFQFGYNTGVINAPEKIIKEFINKTLTDKGNAPPSEVLLTSLWSLSVAIFSVGGMIGSFSVGLFVNRFGRRNSMLIVNLLAVTGGCFMGLCKVAKSVEMLILGRLIIGLFCGLCTGFVPMYIGEISPTALRGAFGTLNQLGIVVGILVAQIFGLEFILGSEELWPLLLGFTILPTILQSAALPFCPESPRFLLINRKEEENAKQILQRLWGTQDVSQDIQEMKDESARMSQEKQVTVLELFRVSSYRQPIIISIVLQLSQQLSGINAVFYYSTGIFKDAGVQEPIYATIGAGVVNTIFTVVSLFLVERAGRRTLHMIGLGGMAFCSTLMTVSLLLKDNYNGMSFVCIGAILVFVAFFEIGPGPIPWFIVAELFSQGPRPAAMAVAGCSNWTSNFLVGLLFPSAAHYLGAYVFIIFTGFLITFLAFTFFKVPETRGRTFEDITRAFEGQAHGADRSGKDGVMEVNSIEPAKETTTNV.

Residues 1-10 are Cytoplasmic-facing; it reads MGTQKVTPAL. Residues 11–32 traverse the membrane as a helical segment; the sequence is IFAITVATIGSFQFGYNTGVIN. Over 33-64 the chain is Extracellular; it reads APEKIIKEFINKTLTDKGNAPPSEVLLTSLWS. Asn43 carries N-linked (GlcNAc...) asparagine glycosylation. Residues 65 to 85 form a helical membrane-spanning segment; sequence LSVAIFSVGGMIGSFSVGLFV. The Cytoplasmic portion of the chain corresponds to 86 to 90; the sequence is NRFGR. Residues 91–111 form a helical membrane-spanning segment; sequence RNSMLIVNLLAVTGGCFMGLC. The Extracellular portion of the chain corresponds to 112-118; the sequence is KVAKSVE. A helical membrane pass occupies residues 119–142; sequence MLILGRLIIGLFCGLCTGFVPMYI. Topologically, residues 143 to 153 are cytoplasmic; that stretch reads GEISPTALRGA. A helical transmembrane segment spans residues 154-174; the sequence is FGTLNQLGIVVGILVAQIFGL. D-glucose is bound at residue Gln159. Residues 175–183 lie on the Extracellular side of the membrane; it reads EFILGSEEL. Residues 184–204 traverse the membrane as a helical segment; that stretch reads WPLLLGFTILPTILQSAALPF. The Cytoplasmic portion of the chain corresponds to 205 to 269; sequence CPESPRFLLI…LFRVSSYRQP (65 aa). The residue at position 232 (Thr232) is a Phosphothreonine. Residues 270–290 form a helical membrane-spanning segment; the sequence is IIISIVLQLSQQLSGINAVFY. The important for selectivity against fructose stretch occupies residues 277–279; sequence QLS. D-glucose contacts are provided by residues 280 to 281 and Asn286; that span reads QQ. The Extracellular portion of the chain corresponds to 291-304; sequence YSTGIFKDAGVQEP. The chain crosses the membrane as a helical span at residues 305-325; the sequence is IYATIGAGVVNTIFTVVSLFL. Asn315 contributes to the D-glucose binding site. The Cytoplasmic portion of the chain corresponds to 326–331; that stretch reads VERAGR. The chain crosses the membrane as a helical span at residues 332–352; sequence RTLHMIGLGGMAFCSTLMTVS. The Extracellular portion of the chain corresponds to 353 to 363; it reads LLLKDNYNGMS. The chain crosses the membrane as a helical span at residues 364–389; it reads FVCIGAILVFVAFFEIGPGPIPWFIV. Glu378 and Trp386 together coordinate D-glucose. The Cytoplasmic segment spans residues 390-399; sequence AELFSQGPRP. Residues 400 to 420 form a helical membrane-spanning segment; it reads AAMAVAGCSNWTSNFLVGLLF. Residues 421 to 429 lie on the Extracellular side of the membrane; the sequence is PSAAHYLGA. The chain crosses the membrane as a helical span at residues 430–450; that stretch reads YVFIIFTGFLITFLAFTFFKV. Residues 451-496 lie on the Cytoplasmic side of the membrane; the sequence is PETRGRTFEDITRAFEGQAHGADRSGKDGVMEVNSIEPAKETTTNV. Phosphoserine occurs at positions 475 and 485. Thr492 is subject to Phosphothreonine.

The protein belongs to the major facilitator superfamily. Sugar transporter (TC 2.A.1.1) family. Glucose transporter subfamily. Interacts with SMIM43; the interaction may promote SLC2A3-mediated glucose transport to meet the energy needs of mesendoderm differentiation.

Its subcellular location is the cell membrane. It is found in the perikaryon. The protein localises to the cell projection. It catalyses the reaction D-glucose(out) = D-glucose(in). It carries out the reaction D-galactose(in) = D-galactose(out). With respect to regulation, deoxyglucose transport is inhibited by D-glucose, D-galactose and maltose. Galactose transport is inhibited by D-glucose and maltose. Its function is as follows. Facilitative glucose transporter. Can also mediate the uptake of various other monosaccharides across the cell membrane. Mediates the uptake of glucose, 2-deoxyglucose, galactose, mannose, xylose and fucose, and probably also dehydroascorbate. Does not mediate fructose transport. Required for mesendoderm differentiation. The sequence is that of Solute carrier family 2, facilitated glucose transporter member 3 from Pongo abelii (Sumatran orangutan).